We begin with the raw amino-acid sequence, 181 residues long: Protein GrpE (181 aa).

The segment covering 1-10 (MENTQENPAT) has biased composition (polar residues). Residues 1–33 (MENTQENPATPSAEDIGSEKQAAQGAAPAAEAA) form a disordered region. The span at 21-33 (QAAQGAAPAAEAA) shows a compositional bias: low complexity.

Belongs to the GrpE family. As to quaternary structure, homodimer.

It localises to the cytoplasm. In terms of biological role, participates actively in the response to hyperosmotic and heat shock by preventing the aggregation of stress-denatured proteins, in association with DnaK and GrpE. It is the nucleotide exchange factor for DnaK and may function as a thermosensor. Unfolded proteins bind initially to DnaJ; upon interaction with the DnaJ-bound protein, DnaK hydrolyzes its bound ATP, resulting in the formation of a stable complex. GrpE releases ADP from DnaK; ATP binding to DnaK triggers the release of the substrate protein, thus completing the reaction cycle. Several rounds of ATP-dependent interactions between DnaJ, DnaK and GrpE are required for fully efficient folding. In Burkholderia cenocepacia (strain ATCC BAA-245 / DSM 16553 / LMG 16656 / NCTC 13227 / J2315 / CF5610) (Burkholderia cepacia (strain J2315)), this protein is Protein GrpE.